The sequence spans 516 residues: Probable serine/threonine-protein kinase ECU02_0550 (516 aa).

Positions 4–230 constitute a Protein kinase domain; that stretch reads YKLRQVIGEG…ASEALMHRSF (227 aa). Residues 10-18 and Lys-32 contribute to the ATP site; that span reads IGEGASSTV. The active-site Proton acceptor is Asp-120.

The protein belongs to the protein kinase superfamily. CAMK Ser/Thr protein kinase family.

It catalyses the reaction L-seryl-[protein] + ATP = O-phospho-L-seryl-[protein] + ADP + H(+). The catalysed reaction is L-threonyl-[protein] + ATP = O-phospho-L-threonyl-[protein] + ADP + H(+). This chain is Probable serine/threonine-protein kinase ECU02_0550, found in Encephalitozoon cuniculi (strain GB-M1) (Microsporidian parasite).